The primary structure comprises 154 residues: Fucose mutarotase (154 aa).

His-24 functions as the Proton donor in the catalytic mechanism. A substrate-binding site is contributed by Asp-32. Asp-69 is a catalytic residue. Substrate is bound by residues Met-79, Tyr-120, Tyr-138, and Asn-140. Tyr-120 is a catalytic residue.

The protein belongs to the RbsD / FucU family. Mainly homodimer, but also exists as homotetramer, homooctamer, and homodecamer. The homodimeric form seems catalytically inactive.

It catalyses the reaction alpha-L-fucose = beta-L-fucose. It functions in the pathway carbohydrate metabolism; L-fucose metabolism. Its function is as follows. Involved in the interconversion between alpha- and beta-L-fucoses. L-Fucose (6-deoxy-L-galactose) exists as alpha-L-fucose (29.5%) and beta-L-fucose (70.5%), the beta-form is metabolized through the salvage pathway. GDP-L-fucose formed either by the de novo or salvage pathways is transported into the endoplasmic reticulum, where it serves as a substrate for N- and O-glycosylations by fucosyltransferases. Fucosylated structures expressed on cell surfaces or secreted in biological fluids are believed to play a critical role in cell-cell adhesion and recognition processes. The chain is Fucose mutarotase (FUOM) from Homo sapiens (Human).